The sequence spans 312 residues: Tetraacyldisaccharide 4'-kinase (312 aa).

An ATP-binding site is contributed by 60–67 (IAGGSGKT).

Belongs to the LpxK family.

The enzyme catalyses a lipid A disaccharide + ATP = a lipid IVA + ADP + H(+). It functions in the pathway glycolipid biosynthesis; lipid IV(A) biosynthesis; lipid IV(A) from (3R)-3-hydroxytetradecanoyl-[acyl-carrier-protein] and UDP-N-acetyl-alpha-D-glucosamine: step 6/6. Transfers the gamma-phosphate of ATP to the 4'-position of a tetraacyldisaccharide 1-phosphate intermediate (termed DS-1-P) to form tetraacyldisaccharide 1,4'-bis-phosphate (lipid IVA). The chain is Tetraacyldisaccharide 4'-kinase from Helicobacter pylori (strain J99 / ATCC 700824) (Campylobacter pylori J99).